The sequence spans 304 residues: Quinolinate synthase (304 aa).

2 residues coordinate iminosuccinate: His-24 and Ser-41. Residue Cys-86 participates in [4Fe-4S] cluster binding. Iminosuccinate is bound by residues Tyr-112–Asn-114 and Ser-129. Cys-171 contacts [4Fe-4S] cluster. Residues His-197–Glu-199 and Thr-214 each bind iminosuccinate. [4Fe-4S] cluster is bound at residue Cys-259.

The protein belongs to the quinolinate synthase family. Type 2 subfamily. It depends on [4Fe-4S] cluster as a cofactor.

Its subcellular location is the cytoplasm. It carries out the reaction iminosuccinate + dihydroxyacetone phosphate = quinolinate + phosphate + 2 H2O + H(+). It functions in the pathway cofactor biosynthesis; NAD(+) biosynthesis; quinolinate from iminoaspartate: step 1/1. Its function is as follows. Catalyzes the condensation of iminoaspartate with dihydroxyacetone phosphate to form quinolinate. This chain is Quinolinate synthase, found in Geobacter sp. (strain M21).